The following is a 280-amino-acid chain: uncharacterized protein (280 aa).

6 helical membrane-spanning segments follow: residues 3-23 (ILITALEQSLIMLPLILGMYI), 52-72 (FGLFHALIFAIIAGGINGSIV), 81-101 (INGLIAGILANFMLYSVNLQI), 123-143 (NWLVPLILINSFIIVIVLILL), 196-216 (FADINMGYGVALVGIGAIIIG), and 233-253 (IFACFIGILFYFISLSILLHI).

It is found in the cell membrane. This is an uncharacterized protein from Rickettsia prowazekii (strain Madrid E).